The primary structure comprises 221 residues: Ribosomal RNA small subunit methyltransferase G (221 aa).

S-adenosyl-L-methionine contacts are provided by residues G89, L94, 140 to 141 (VE), and R154.

The protein belongs to the methyltransferase superfamily. RNA methyltransferase RsmG family.

It is found in the cytoplasm. The enzyme catalyses guanosine(527) in 16S rRNA + S-adenosyl-L-methionine = N(7)-methylguanosine(527) in 16S rRNA + S-adenosyl-L-homocysteine. Functionally, specifically methylates the N7 position of guanine in position 527 of 16S rRNA. The chain is Ribosomal RNA small subunit methyltransferase G from Methylibium petroleiphilum (strain ATCC BAA-1232 / LMG 22953 / PM1).